A 284-amino-acid polypeptide reads, in one-letter code: Avenin-like b5 (284 aa).

Residues 1-18 (MKVFILALLALTATTAIA) form the signal peptide.

It belongs to the prolamin family. Post-translationally, contains disulfide bonds. In terms of tissue distribution, expressed only in developing endosperms. Not detected in roots, stems or leaves.

In terms of biological role, seed storage protein. Might be integrated via inter-chain disulfide bonds within the glutenin polymer. In Triticum aestivum (Wheat), this protein is Avenin-like b5.